The following is a 130-amino-acid chain: Histone H2B.1 (130 aa).

A compositionally biased stretch (basic and acidic residues) spans 1 to 19 (MAPKAEKKPASKAPAEKKP). The segment at 1–39 (MAPKAEKKPASKAPAEKKPAAKKTASATGTKKRSKTRKE) is disordered. N6-acetyllysine; alternate is present on residues Lys7 and Lys8. Residues Lys7 and Lys8 each participate in a glycyl lysine isopeptide (Lys-Gly) (interchain with G-Cter in SUMO); alternate cross-link. Ser11 carries the phosphoserine modification. Position 12 is an N6-acetyllysine (Lys12). Lys17 carries the N6-acetyllysine; alternate modification. Residue Lys17 forms a Glycyl lysine isopeptide (Lys-Gly) (interchain with G-Cter in SUMO); alternate linkage. Lys18 is covalently cross-linked (Glycyl lysine isopeptide (Lys-Gly) (interchain with G-Cter in SUMO)). Lys124 is covalently cross-linked (Glycyl lysine isopeptide (Lys-Gly) (interchain with G-Cter in ubiquitin)).

It belongs to the histone H2B family. As to quaternary structure, the nucleosome is a histone octamer containing two molecules each of H2A, H2B, H3 and H4 assembled in one H3-H4 heterotetramer and two H2A-H2B heterodimers. The octamer wraps approximately 147 bp of DNA. Post-translationally, monoubiquitinated by the UBC2-BRE1 complex to form H2BK123ub1. H2BK123ub1 gives a specific tag for epigenetic transcriptional activation and is also prerequisite for H3K4me and H3K79me formation. H2BK123ub1 also modulates the formation of double-strand breaks during meiosis and is a prerequisite for DNA-damage checkpoint activation. In terms of processing, phosphorylated by STE20 to form H2BS10ph during progression through meiotic prophase. May be correlated with chromosome condensation. Acetylated by GCN5 to form H2BK11ac and H2BK16ac. H2BK16ac can also be formed by ESA1. Acetylation of N-terminal lysines and particularly formation of H2BK11acK16ac has a positive effect on transcription. Post-translationally, sumoylation to form H2BK6su or H2BK7su, and probably also H2BK16su or H2BK17su, occurs preferentially near the telomeres and represses gene transcription.

The protein resides in the nucleus. It localises to the chromosome. Core component of nucleosome. Nucleosomes wrap and compact DNA into chromatin, limiting DNA accessibility to the cellular machineries which require DNA as a template. Histones thereby play a central role in transcription regulation, DNA repair, DNA replication and chromosomal stability. DNA accessibility is regulated via a complex set of post-translational modifications of histones, also called histone code, and nucleosome remodeling. The chain is Histone H2B.1 (HTB1) from Debaryomyces hansenii (strain ATCC 36239 / CBS 767 / BCRC 21394 / JCM 1990 / NBRC 0083 / IGC 2968) (Yeast).